The chain runs to 372 residues: Erythronate-4-phosphate dehydrogenase (372 aa).

Positions 45 and 66 each coordinate substrate. D146 contributes to the NAD(+) binding site. R209 is an active-site residue. An NAD(+)-binding site is contributed by D233. E238 is a catalytic residue. The active-site Proton donor is H255. G258 contributes to the NAD(+) binding site. Y259 contacts substrate.

It belongs to the D-isomer specific 2-hydroxyacid dehydrogenase family. PdxB subfamily. In terms of assembly, homodimer.

The protein localises to the cytoplasm. The catalysed reaction is 4-phospho-D-erythronate + NAD(+) = (R)-3-hydroxy-2-oxo-4-phosphooxybutanoate + NADH + H(+). It functions in the pathway cofactor biosynthesis; pyridoxine 5'-phosphate biosynthesis; pyridoxine 5'-phosphate from D-erythrose 4-phosphate: step 2/5. Functionally, catalyzes the oxidation of erythronate-4-phosphate to 3-hydroxy-2-oxo-4-phosphonooxybutanoate. This is Erythronate-4-phosphate dehydrogenase from Blochmanniella floridana.